A 100-amino-acid chain; its full sequence is Large ribosomal subunit protein eL21 (100 aa).

Basic residues predominate over residues 1 to 21; the sequence is MVKRTHGYRYKSRKLLRKKPR. Positions 1-22 are disordered; sequence MVKRTHGYRYKSRKLLRKKPRE.

This sequence belongs to the eukaryotic ribosomal protein eL21 family.

This chain is Large ribosomal subunit protein eL21, found in Pyrobaculum neutrophilum (strain DSM 2338 / JCM 9278 / NBRC 100436 / V24Sta) (Thermoproteus neutrophilus).